Consider the following 83-residue polypeptide: Acid shock protein (83 aa).

An N-terminal signal peptide occupies residues Met-1–Ala-21. The segment covering Ala-22–Thr-40 has biased composition (low complexity). The propeptide occupies Ala-22–Gln-56. Residues Ala-22–Ala-83 form a disordered region. Positions Ala-57–Pro-70 are enriched in basic residues. Over residues Ala-71–Ala-83 the composition is skewed to low complexity.

This sequence belongs to the Asr family. Proteolytic processing gives rise to the active protein.

It localises to the periplasm. Functionally, required for growth and/or survival at acidic conditions. The sequence is that of Acid shock protein from Salmonella heidelberg (strain SL476).